The chain runs to 222 residues: Dual specificity phosphatase 29 (222 aa).

In terms of domain architecture, Tyrosine-protein phosphatase spans 54–202; it reads HVNEVWPKLY…LRELDKQLVQ (149 aa). Substrate is bound at residue 146 to 153; sequence HCAMGRSR. Catalysis depends on C147, which acts as the Phosphocysteine intermediate. The tract at residues 201-222 is disordered; sequence VQQRRGAQHRGEAGEKAGEKEP. Basic and acidic residues predominate over residues 209–222; it reads HRGEAGEKAGEKEP.

Belongs to the protein-tyrosine phosphatase family. Non-receptor class dual specificity subfamily. Homodimer. Interacts with PRKAA2.

Its subcellular location is the cytoplasm. The protein resides in the nucleus. The enzyme catalyses O-phospho-L-tyrosyl-[protein] + H2O = L-tyrosyl-[protein] + phosphate. It catalyses the reaction O-phospho-L-seryl-[protein] + H2O = L-seryl-[protein] + phosphate. The catalysed reaction is O-phospho-L-threonyl-[protein] + H2O = L-threonyl-[protein] + phosphate. Functionally, dual specificity phosphatase able to dephosphorylate phosphotyrosine, phosphoserine and phosphothreonine residues within the same substrate, with a preference for phosphotyrosine as a substrate. Involved in the modulation of intracellular signaling cascades. In skeletal muscle regulates systemic glucose homeostasis by activating, AMPK, an energy sensor protein kinase. Affects MAP kinase signaling though modulation of the MAPK1/2 cascade in skeletal muscle promoting muscle cell differentiation, development and atrophy. The sequence is that of Dual specificity phosphatase 29 (DUSP29) from Sus scrofa (Pig).